Here is a 490-residue protein sequence, read N- to C-terminus: N-succinylglutamate 5-semialdehyde dehydrogenase (490 aa).

NAD(+) is bound at residue 220 to 225 (GSANTG). Active-site residues include E243 and C277.

This sequence belongs to the aldehyde dehydrogenase family. AstD subfamily.

The enzyme catalyses N-succinyl-L-glutamate 5-semialdehyde + NAD(+) + H2O = N-succinyl-L-glutamate + NADH + 2 H(+). The protein operates within amino-acid degradation; L-arginine degradation via AST pathway; L-glutamate and succinate from L-arginine: step 4/5. Its function is as follows. Catalyzes the NAD-dependent reduction of succinylglutamate semialdehyde into succinylglutamate. The sequence is that of N-succinylglutamate 5-semialdehyde dehydrogenase from Shigella dysenteriae serotype 1 (strain Sd197).